We begin with the raw amino-acid sequence, 218 residues long: MDKSESTSAGRNRRRRLRRGSRSASSSSDANFRVLSQQLSRLNKTLAAGRPTINHPTFVGSERCKPGYTFTSITLRPPKIDRESYYGKRLLLPDSVMEYDKKLVSRIQIRVNPLPKFDSTVWVTVRKVSASSDLSVAAISAMFADGASPVLVYQYAASGVQANNKLLYDLSAMRADIGDMRKYAVLVYSKDDTLETDELVLHVDVEHQRIPTSGVLPV.

M1 is modified (N-acetylmethionine; by host). Residues 1-10 (MDKSESTSAG) are compositionally biased toward low complexity. Residues 1-30 (MDKSESTSAGRNRRRRLRRGSRSASSSSDA) are disordered. Positions 11 to 21 (RNRRRRLRRGS) are enriched in basic residues.

Belongs to the cucumovirus capsid protein family.

The protein localises to the virion. Functionally, capsid protein. Probably binds RNA and plays a role in packaging. The protein is Capsid protein of Cucumber mosaic virus (strain Y) (CMV).